Here is a 396-residue protein sequence, read N- to C-terminus: Acetate kinase (396 aa).

Residue N8 coordinates Mg(2+). Residue K15 participates in ATP binding. Residue R89 coordinates substrate. D146 (proton donor/acceptor) is an active-site residue. ATP contacts are provided by residues 206–210 (HLGNG), 280–282 (DMR), and 328–332 (GVGEN). Residue E382 participates in Mg(2+) binding.

This sequence belongs to the acetokinase family. In terms of assembly, homodimer. Mg(2+) is required as a cofactor. Requires Mn(2+) as cofactor.

Its subcellular location is the cytoplasm. It catalyses the reaction acetate + ATP = acetyl phosphate + ADP. Its pathway is metabolic intermediate biosynthesis; acetyl-CoA biosynthesis; acetyl-CoA from acetate: step 1/2. Functionally, catalyzes the formation of acetyl phosphate from acetate and ATP. Can also catalyze the reverse reaction. This Clavibacter sepedonicus (Clavibacter michiganensis subsp. sepedonicus) protein is Acetate kinase.